The chain runs to 214 residues: Large ribosomal subunit protein uL16 (214 aa).

R32 carries the citrulline modification. A Glycyl lysine isopeptide (Lys-Gly) (interchain with G-Cter in SUMO2) cross-link involves residue K175. K188 is covalently cross-linked (Glycyl lysine isopeptide (Lys-Gly) (interchain with G-Cter in ubiquitin)).

This sequence belongs to the universal ribosomal protein uL16 family. As to quaternary structure, component of the large ribosomal subunit. Mature ribosomes consist of a small (40S) and a large (60S) subunit. The 40S subunit contains about 33 different proteins and 1 molecule of RNA (18S). The 60S subunit contains about 49 different proteins and 3 molecules of RNA (28S, 5.8S and 5S). Post-translationally, citrullinated by PADI4. In terms of processing, ufmylated by UFL1.

The protein resides in the cytoplasm. Component of the large ribosomal subunit. Plays a role in the formation of actively translating ribosomes. May play a role in the embryonic brain development. This is Large ribosomal subunit protein uL16 from Bos taurus (Bovine).